Reading from the N-terminus, the 293-residue chain is Phosphatidylserine decarboxylase proenzyme (293 aa).

Active-site charge relay system; for autoendoproteolytic cleavage activity residues include Asp90, His147, and Ser254. Ser254 (schiff-base intermediate with substrate; via pyruvic acid; for decarboxylase activity) is an active-site residue. Ser254 is modified (pyruvic acid (Ser); by autocatalysis).

Belongs to the phosphatidylserine decarboxylase family. PSD-B subfamily. Prokaryotic type I sub-subfamily. Heterodimer of a large membrane-associated beta subunit and a small pyruvoyl-containing alpha subunit. The cofactor is pyruvate. Is synthesized initially as an inactive proenzyme. Formation of the active enzyme involves a self-maturation process in which the active site pyruvoyl group is generated from an internal serine residue via an autocatalytic post-translational modification. Two non-identical subunits are generated from the proenzyme in this reaction, and the pyruvate is formed at the N-terminus of the alpha chain, which is derived from the carboxyl end of the proenzyme. The autoendoproteolytic cleavage occurs by a canonical serine protease mechanism, in which the side chain hydroxyl group of the serine supplies its oxygen atom to form the C-terminus of the beta chain, while the remainder of the serine residue undergoes an oxidative deamination to produce ammonia and the pyruvoyl prosthetic group on the alpha chain. During this reaction, the Ser that is part of the protease active site of the proenzyme becomes the pyruvoyl prosthetic group, which constitutes an essential element of the active site of the mature decarboxylase.

The protein resides in the cell membrane. It carries out the reaction a 1,2-diacyl-sn-glycero-3-phospho-L-serine + H(+) = a 1,2-diacyl-sn-glycero-3-phosphoethanolamine + CO2. It participates in phospholipid metabolism; phosphatidylethanolamine biosynthesis; phosphatidylethanolamine from CDP-diacylglycerol: step 2/2. In terms of biological role, catalyzes the formation of phosphatidylethanolamine (PtdEtn) from phosphatidylserine (PtdSer). The protein is Phosphatidylserine decarboxylase proenzyme of Yersinia enterocolitica serotype O:8 / biotype 1B (strain NCTC 13174 / 8081).